Here is a 164-residue protein sequence, read N- to C-terminus: S-ribosylhomocysteine lyase (164 aa).

Positions 54, 58, and 128 each coordinate Fe cation.

Belongs to the LuxS family. As to quaternary structure, homodimer. The cofactor is Fe cation.

It catalyses the reaction S-(5-deoxy-D-ribos-5-yl)-L-homocysteine = (S)-4,5-dihydroxypentane-2,3-dione + L-homocysteine. Involved in the synthesis of autoinducer 2 (AI-2) which is secreted by bacteria and is used to communicate both the cell density and the metabolic potential of the environment. The regulation of gene expression in response to changes in cell density is called quorum sensing. Catalyzes the transformation of S-ribosylhomocysteine (RHC) to homocysteine (HC) and 4,5-dihydroxy-2,3-pentadione (DPD). In Campylobacter hominis (strain ATCC BAA-381 / DSM 21671 / CCUG 45161 / LMG 19568 / NCTC 13146 / CH001A), this protein is S-ribosylhomocysteine lyase.